Consider the following 286-residue polypeptide: Pantothenate synthetase (286 aa).

30–37 (MGYFHEGH) lines the ATP pocket. The Proton donor role is filled by histidine 37. Residue glutamine 61 coordinates (R)-pantoate. Residue glutamine 61 participates in beta-alanine binding. Position 147-150 (147-150 (GKKD)) interacts with ATP. Glutamine 153 is a (R)-pantoate binding site. Residue 184–187 (MSSR) participates in ATP binding.

This sequence belongs to the pantothenate synthetase family. In terms of assembly, homodimer.

It is found in the cytoplasm. The enzyme catalyses (R)-pantoate + beta-alanine + ATP = (R)-pantothenate + AMP + diphosphate + H(+). It participates in cofactor biosynthesis; (R)-pantothenate biosynthesis; (R)-pantothenate from (R)-pantoate and beta-alanine: step 1/1. Functionally, catalyzes the condensation of pantoate with beta-alanine in an ATP-dependent reaction via a pantoyl-adenylate intermediate. The polypeptide is Pantothenate synthetase (Syntrophus aciditrophicus (strain SB)).